The chain runs to 652 residues: DNA ligase (652 aa).

Residues 29-33 (DQEYD), 78-79 (SL), and glutamate 107 contribute to the NAD(+) site. Lysine 109 acts as the N6-AMP-lysine intermediate in catalysis. NAD(+)-binding residues include arginine 130, glutamate 164, lysine 278, and lysine 302. The Zn(2+) site is built by cysteine 395, cysteine 398, cysteine 413, and cysteine 418. Residues 577-652 (DTSAQLFGLT…VKDENWLLQL (76 aa)) form the BRCT domain.

This sequence belongs to the NAD-dependent DNA ligase family. LigA subfamily. The cofactor is Mg(2+). Mn(2+) serves as cofactor.

The catalysed reaction is NAD(+) + (deoxyribonucleotide)n-3'-hydroxyl + 5'-phospho-(deoxyribonucleotide)m = (deoxyribonucleotide)n+m + AMP + beta-nicotinamide D-nucleotide.. DNA ligase that catalyzes the formation of phosphodiester linkages between 5'-phosphoryl and 3'-hydroxyl groups in double-stranded DNA using NAD as a coenzyme and as the energy source for the reaction. It is essential for DNA replication and repair of damaged DNA. The chain is DNA ligase from Streptococcus uberis (strain ATCC BAA-854 / 0140J).